The following is a 226-amino-acid chain: 7-cyano-7-deazaguanine synthase (226 aa).

An ATP-binding site is contributed by 9–19; it reads YSGGLDSTTCL. Zn(2+)-binding residues include Cys189, Cys199, Cys202, and Cys205.

The protein belongs to the QueC family. Zn(2+) serves as cofactor.

It catalyses the reaction 7-carboxy-7-deazaguanine + NH4(+) + ATP = 7-cyano-7-deazaguanine + ADP + phosphate + H2O + H(+). It functions in the pathway purine metabolism; 7-cyano-7-deazaguanine biosynthesis. Its function is as follows. Catalyzes the ATP-dependent conversion of 7-carboxy-7-deazaguanine (CDG) to 7-cyano-7-deazaguanine (preQ(0)). This is 7-cyano-7-deazaguanine synthase from Pelobacter propionicus (strain DSM 2379 / NBRC 103807 / OttBd1).